A 78-amino-acid chain; its full sequence is Dermaseptin-B1 (78 aa).

The N-terminal stretch at 1–22 is a signal peptide; sequence MDILKKSLFLVLFLGLVSLSIC. Positions 23–42 are excised as a propeptide; it reads EEEKRENEDEEKQDDEQSEM. The residue at position 75 (Gln75) is a Glutamine amide. Positions 76–78 are excised as a propeptide; sequence GEQ.

It belongs to the frog skin active peptide (FSAP) family. Dermaseptin subfamily. As to expression, expressed by the skin glands.

It localises to the secreted. Its function is as follows. Possesses a potent antimicrobial activity against bacteria, fungi and protozoa. Probably acts by disturbing membrane functions with its amphipathic structure. This chain is Dermaseptin-B1, found in Phyllomedusa bicolor (Two-colored leaf frog).